A 113-amino-acid polypeptide reads, in one-letter code: Cell cycle protein GpsB (113 aa).

Residues 32–71 (LDNVIKDYESFTKDNQQLSDENERLRAKVDELTKQVAVGA) are a coiled coil.

This sequence belongs to the GpsB family. As to quaternary structure, forms polymers through the coiled coil domains. Interacts with PBP1, MreC and EzrA.

Its subcellular location is the cytoplasm. Its function is as follows. Divisome component that associates with the complex late in its assembly, after the Z-ring is formed, and is dependent on DivIC and PBP2B for its recruitment to the divisome. Together with EzrA, is a key component of the system that regulates PBP1 localization during cell cycle progression. Its main role could be the removal of PBP1 from the cell pole after pole maturation is completed. Also contributes to the recruitment of PBP1 to the division complex. Not essential for septum formation. The polypeptide is Cell cycle protein GpsB (Lactiplantibacillus plantarum (strain ATCC BAA-793 / NCIMB 8826 / WCFS1) (Lactobacillus plantarum)).